The chain runs to 390 residues: Galactokinase (390 aa).

E34–D37 lines the substrate pocket. ATP contacts are provided by residues S68 and G122–S128. 2 residues coordinate Mg(2+): S128 and E160. D172 (proton acceptor) is an active-site residue. A substrate-binding site is contributed by Y221.

The protein belongs to the GHMP kinase family. GalK subfamily.

Its subcellular location is the cytoplasm. The enzyme catalyses alpha-D-galactose + ATP = alpha-D-galactose 1-phosphate + ADP + H(+). Its pathway is carbohydrate metabolism; galactose metabolism. Its function is as follows. Catalyzes the transfer of the gamma-phosphate of ATP to D-galactose to form alpha-D-galactose-1-phosphate (Gal-1-P). The chain is Galactokinase from Chloroflexus aurantiacus (strain ATCC 29366 / DSM 635 / J-10-fl).